A 115-amino-acid chain; its full sequence is U3-lycotoxin-Ls1v (115 aa).

Residues 1 to 20 form the signal peptide; that stretch reads MKFVLLFGVLLVTLFSHSSA. Residues 21-44 constitute a propeptide that is removed on maturation; it reads EMLDDFDQADEDELLSLIEKEEAR. Disulfide bonds link Cys48/Cys63, Cys55/Cys72, Cys62/Cys87, and Cys74/Cys85.

It belongs to the neurotoxin 19 (CSTX) family. 01 subfamily. In terms of tissue distribution, expressed by the venom gland.

It localises to the secreted. This chain is U3-lycotoxin-Ls1v, found in Lycosa singoriensis (Wolf spider).